The sequence spans 81 residues: ATP synthase subunit c, chloroplastic (81 aa).

Transmembrane regions (helical) follow at residues 7–27 (AASVIAAGLAVGLASIGPGIG) and 57–77 (LAFMEALTIYGLVVALALLFA).

This sequence belongs to the ATPase C chain family. As to quaternary structure, F-type ATPases have 2 components, F(1) - the catalytic core - and F(0) - the membrane proton channel. F(1) has five subunits: alpha(3), beta(3), gamma(1), delta(1), epsilon(1). F(0) has four main subunits: a(1), b(1), b'(1) and c(10-14). The alpha and beta chains form an alternating ring which encloses part of the gamma chain. F(1) is attached to F(0) by a central stalk formed by the gamma and epsilon chains, while a peripheral stalk is formed by the delta, b and b' chains.

Its subcellular location is the plastid. It localises to the chloroplast thylakoid membrane. In terms of biological role, f(1)F(0) ATP synthase produces ATP from ADP in the presence of a proton or sodium gradient. F-type ATPases consist of two structural domains, F(1) containing the extramembraneous catalytic core and F(0) containing the membrane proton channel, linked together by a central stalk and a peripheral stalk. During catalysis, ATP synthesis in the catalytic domain of F(1) is coupled via a rotary mechanism of the central stalk subunits to proton translocation. Its function is as follows. Key component of the F(0) channel; it plays a direct role in translocation across the membrane. A homomeric c-ring of between 10-14 subunits forms the central stalk rotor element with the F(1) delta and epsilon subunits. The protein is ATP synthase subunit c, chloroplastic of Pelargonium hortorum (Common geranium).